We begin with the raw amino-acid sequence, 99 residues long: NADH-quinone oxidoreductase subunit K (99 aa).

3 helical membrane passes run 3–23 (PDNY…GVLL), 28–48 (IVVF…FVAF), and 59–79 (VVAF…LAII).

This sequence belongs to the complex I subunit 4L family. As to quaternary structure, NDH-1 is composed of 14 different subunits. Subunits NuoA, H, J, K, L, M, N constitute the membrane sector of the complex.

The protein resides in the cell membrane. It catalyses the reaction a quinone + NADH + 5 H(+)(in) = a quinol + NAD(+) + 4 H(+)(out). NDH-1 shuttles electrons from NADH, via FMN and iron-sulfur (Fe-S) centers, to quinones in the respiratory chain. The immediate electron acceptor for the enzyme in this species is believed to be a menaquinone. Couples the redox reaction to proton translocation (for every two electrons transferred, four hydrogen ions are translocated across the cytoplasmic membrane), and thus conserves the redox energy in a proton gradient. In Mycobacterium sp. (strain KMS), this protein is NADH-quinone oxidoreductase subunit K.